A 365-amino-acid chain; its full sequence is Flagellar P-ring protein (365 aa).

The signal sequence occupies residues 1–19 (MFKALAGIVLALVATLAHA).

Belongs to the FlgI family. As to quaternary structure, the basal body constitutes a major portion of the flagellar organelle and consists of four rings (L,P,S, and M) mounted on a central rod.

Its subcellular location is the periplasm. The protein resides in the bacterial flagellum basal body. Assembles around the rod to form the L-ring and probably protects the motor/basal body from shearing forces during rotation. In Salmonella heidelberg (strain SL476), this protein is Flagellar P-ring protein.